We begin with the raw amino-acid sequence, 366 residues long: Mitogen-activated protein kinase 13 (366 aa).

The Protein kinase domain maps to 25–308; sequence YLAPAHVGSG…AAQALAHPFF (284 aa). Residues 31–39 and K54 contribute to the ATP site; that span reads VGSGAYGAV. Catalysis depends on D150, which acts as the Proton acceptor. Phosphothreonine; by MAP2K3, MAP2K4, MAP2K6 and MAP2K7 is present on T180. The TXY motif lies at 180–182; the sequence is TGY. Y182 carries the phosphotyrosine modification. Position 350 is a phosphoserine (S350).

This sequence belongs to the protein kinase superfamily. CMGC Ser/Thr protein kinase family. MAP kinase subfamily. Interacts with MAPK8IP2. Mg(2+) is required as a cofactor. Dually phosphorylated on Thr-180 and Tyr-182 by MAP2K3/MKK3, MAP2K4/MKK4, MAP2K6/MKK6 and MAP2K7/MKK7, which activates the enzyme. Dephosphorylated by dual specificity phosphatase DUSP1.

It catalyses the reaction L-seryl-[protein] + ATP = O-phospho-L-seryl-[protein] + ADP + H(+). It carries out the reaction L-threonyl-[protein] + ATP = O-phospho-L-threonyl-[protein] + ADP + H(+). Its activity is regulated as follows. Activated by phosphorylation on threonine and tyrosine by dual specificity kinases, MAP2K3/MKK3, MAP2K6/MKK6, MAP2K4/MKK4 and MAP2K7/MKK7. Activation by ultraviolet radiation, hyperosmotic shock, anisomycin or by TNF-alpha is mediated by MAP2K3/MKK3. Inhibited by dual specificity phosphatase DUSP1. Functionally, serine/threonine kinase which acts as an essential component of the MAP kinase signal transduction pathway. MAPK13 is one of the four p38 MAPKs which play an important role in the cascades of cellular responses evoked by extracellular stimuli such as pro-inflammatory cytokines or physical stress leading to direct activation of transcription factors such as ELK1 and ATF2. Accordingly, p38 MAPKs phosphorylate a broad range of proteins and it has been estimated that they may have approximately 200 to 300 substrates each. MAPK13 is one of the less studied p38 MAPK isoforms. Some of the targets are downstream kinases such as MAPKAPK2, which are activated through phosphorylation and further phosphorylate additional targets. Plays a role in the regulation of protein translation by phosphorylating and inactivating EEF2K. Involved in cytoskeletal remodeling through phosphorylation of MAPT and STMN1. Mediates UV irradiation induced up-regulation of the gene expression of CXCL14. Plays an important role in the regulation of epidermal keratinocyte differentiation, apoptosis and skin tumor development. Phosphorylates the transcriptional activator MYB in response to stress which leads to rapid MYB degradation via a proteasome-dependent pathway. MAPK13 also phosphorylates and down-regulates PRKD1 during regulation of insulin secretion in pancreatic beta cells. The protein is Mitogen-activated protein kinase 13 (Mapk13) of Mus musculus (Mouse).